We begin with the raw amino-acid sequence, 370 residues long: Glutathione S-transferase omega-like 2 (370 aa).

Arg15 serves as a coordination point for glutathione. Catalysis depends on Cys46, which acts as the Nucleophile. Trp79, Arg155, Val158, Glu173, and Ser174 together coordinate glutathione. The GST C-terminal domain occupies 201–353 (PAQLKTQIDD…LHYTRSHTRI (153 aa)).

This sequence belongs to the GST superfamily. Omega family. Homodimer.

It localises to the cytoplasm. The catalysed reaction is RX + glutathione = an S-substituted glutathione + a halide anion + H(+). It carries out the reaction L-dehydroascorbate + 2 glutathione = glutathione disulfide + L-ascorbate. Its function is as follows. Active as '1-Cys' thiol transferase against beta-hydroxyethyl disulfide (HED), as dehydroascorbate reductase and as dimethylarsinic acid reductase, while not active against the standard GST substrate 1-chloro-2,4-dinitrobenzene (CDNB). May be involved in cell wall organization and biogenesis. This is Glutathione S-transferase omega-like 2 from Saccharomyces cerevisiae (strain ATCC 204508 / S288c) (Baker's yeast).